The primary structure comprises 93 residues: UPF0223 protein SAG0995 (93 aa).

It belongs to the UPF0223 family.

This chain is UPF0223 protein SAG0995, found in Streptococcus agalactiae serotype V (strain ATCC BAA-611 / 2603 V/R).